We begin with the raw amino-acid sequence, 187 residues long: UPF0301 protein Spro_4027 (187 aa).

Belongs to the UPF0301 (AlgH) family.

In Serratia proteamaculans (strain 568), this protein is UPF0301 protein Spro_4027.